The chain runs to 647 residues: 1-deoxy-D-xylulose-5-phosphate synthase (647 aa).

Residues His-88 and 129-131 (GHA) contribute to the thiamine diphosphate site. A Mg(2+)-binding site is contributed by Asp-160. Thiamine diphosphate-binding positions include 161–162 (GA), Asn-189, Tyr-300, and Glu-377. Asn-189 lines the Mg(2+) pocket.

This sequence belongs to the transketolase family. DXPS subfamily. As to quaternary structure, homodimer. Mg(2+) is required as a cofactor. Thiamine diphosphate serves as cofactor.

The enzyme catalyses D-glyceraldehyde 3-phosphate + pyruvate + H(+) = 1-deoxy-D-xylulose 5-phosphate + CO2. Its pathway is metabolic intermediate biosynthesis; 1-deoxy-D-xylulose 5-phosphate biosynthesis; 1-deoxy-D-xylulose 5-phosphate from D-glyceraldehyde 3-phosphate and pyruvate: step 1/1. Catalyzes the acyloin condensation reaction between C atoms 2 and 3 of pyruvate and glyceraldehyde 3-phosphate to yield 1-deoxy-D-xylulose-5-phosphate (DXP). This is 1-deoxy-D-xylulose-5-phosphate synthase from Dehalococcoides mccartyi (strain CBDB1).